Here is a 436-residue protein sequence, read N- to C-terminus: Protein GOLM2 (436 aa).

At Met-1 the chain carries N-acetylmethionine. At 1–14 (MVGFGANRRAGRLP) the chain is on the cytoplasmic side. The helical; Signal-anchor for type II membrane protein transmembrane segment at 15–35 (SLVLVVLLVVIVVLAFNYWSI) threads the bilayer. A coiled-coil region spans residues 35–198 (ISSRHVLLQE…EEQKQETQKI (164 aa)). At 36 to 436 (SSRHVLLQEE…YGKQHFNDVL (401 aa)) the chain is on the lumenal side. The span at 225-247 (ADKNEEPSSNHIPHGKEQIKRGG) shows a compositional bias: basic and acidic residues. The interval 225 to 436 (ADKNEEPSSN…YGKQHFNDVL (212 aa)) is disordered. A phosphoserine mark is found at Ser-233 and Ser-275. Residues 305–321 (NHNGNPGTSKQNPSSPL) are compositionally biased toward polar residues. Ser-328 and Ser-332 each carry phosphoserine. Basic and acidic residues predominate over residues 344 to 362 (ATKDRVSDFHKLKQSRFFD). At Ser-366 the chain carries Phosphoserine. Over residues 399–418 (YNEEEDGDGGEEDVQDDEER) the composition is skewed to acidic residues. Positions 426–436 (DYGKQHFNDVL) are enriched in basic and acidic residues.

It belongs to the GOLM family.

It is found in the membrane. The polypeptide is Protein GOLM2 (Homo sapiens (Human)).